Consider the following 82-residue polypeptide: Small ribosomal subunit protein uS17 (82 aa).

Belongs to the universal ribosomal protein uS17 family. As to quaternary structure, part of the 30S ribosomal subunit.

One of the primary rRNA binding proteins, it binds specifically to the 5'-end of 16S ribosomal RNA. The chain is Small ribosomal subunit protein uS17 from Shewanella sediminis (strain HAW-EB3).